The primary structure comprises 98 residues: NADH-ubiquinone oxidoreductase chain 4L (98 aa).

The next 3 membrane-spanning stretches (helical) occupy residues 1–21 (MSLT…GLLM), 29–49 (SLLC…MAIL), and 61–81 (IILL…LVMV).

It belongs to the complex I subunit 4L family. As to quaternary structure, core subunit of respiratory chain NADH dehydrogenase (Complex I) which is composed of 45 different subunits.

It is found in the mitochondrion inner membrane. The catalysed reaction is a ubiquinone + NADH + 5 H(+)(in) = a ubiquinol + NAD(+) + 4 H(+)(out). Its function is as follows. Core subunit of the mitochondrial membrane respiratory chain NADH dehydrogenase (Complex I) which catalyzes electron transfer from NADH through the respiratory chain, using ubiquinone as an electron acceptor. Part of the enzyme membrane arm which is embedded in the lipid bilayer and involved in proton translocation. The sequence is that of NADH-ubiquinone oxidoreductase chain 4L (MT-ND4L) from Vampyressa melissa (Melissa's yellow-eared bat).